We begin with the raw amino-acid sequence, 289 residues long: Inorganic pyrophosphatase (289 aa).

S2 carries the post-translational modification N-acetylserine. Position 57 is an N6-acetyllysine (K57). Mg(2+) contacts are provided by D116, D121, and D153. K228 bears the N6-acetyllysine mark. S250 bears the Phosphoserine mark.

It belongs to the PPase family. In terms of assembly, homodimer. The cofactor is Mg(2+).

It localises to the cytoplasm. It catalyses the reaction diphosphate + H2O = 2 phosphate + H(+). This chain is Inorganic pyrophosphatase (PPA1), found in Pongo abelii (Sumatran orangutan).